A 60-amino-acid polypeptide reads, in one-letter code: Putative insect toxin Acra6 (60 aa).

Positions 2 to 60 (RDGYIRRKDEFKFKCYVDGKDCDDVCKSEGGSAGYCTALGFLCYCAGLPDDKAWKPTSS) constitute an LCN-type CS-alpha/beta domain. 3 disulfides stabilise this stretch: Cys16-Cys37, Cys23-Cys44, and Cys27-Cys46.

Belongs to the long (4 C-C) scorpion toxin superfamily. Sodium channel inhibitor family. Beta subfamily. In terms of tissue distribution, expressed by the venom gland.

It localises to the secreted. In terms of biological role, depressant insect toxins cause a transient contraction paralysis followed by a slow flaccid paralysis. They bind voltage-independently to sodium channels (Nav) and block action potentials, primarily by depolarizing the axonal membrane and suppressing the sodium current. The sequence is that of Putative insect toxin Acra6 from Androctonus crassicauda (Arabian fat-tailed scorpion).